We begin with the raw amino-acid sequence, 410 residues long: Translation initiation factor 2 subunit gamma (410 aa).

One can recognise a tr-type G domain in the interval 9 to 202 (QAEVNIGMVG…AIEEFIPTPE (194 aa)). The interval 18-25 (GHVDHGKT) is G1. Mg(2+) contacts are provided by Asp21, Thr25, Gly46, and Thr48. A GTP-binding site is contributed by 21-26 (DHGKTT). Residues 46–50 (GITIK) form a G2 region. 4 residues coordinate Zn(2+): Cys61, Cys64, Cys73, and Cys76. Positions 90–93 (DAPG) are G3. GTP-binding positions include 145-148 (NKIE) and 180-182 (SAL). A G4 region spans residues 145–148 (NKIE). The segment at 180–182 (SAL) is G5.

It belongs to the TRAFAC class translation factor GTPase superfamily. Classic translation factor GTPase family. EIF2G subfamily. In terms of assembly, heterotrimer composed of an alpha, a beta and a gamma chain. The cofactor is Mg(2+).

It catalyses the reaction GTP + H2O = GDP + phosphate + H(+). Functionally, eIF-2 functions in the early steps of protein synthesis by forming a ternary complex with GTP and initiator tRNA. This Thermococcus onnurineus (strain NA1) protein is Translation initiation factor 2 subunit gamma.